Here is a 381-residue protein sequence, read N- to C-terminus: Alkanesulfonate monooxygenase (381 aa).

This sequence belongs to the SsuD family. In terms of assembly, homotetramer.

The enzyme catalyses an alkanesulfonate + FMNH2 + O2 = an aldehyde + FMN + sulfite + H2O + 2 H(+). Functionally, catalyzes the desulfonation of aliphatic sulfonates. This is Alkanesulfonate monooxygenase from Escherichia coli (strain SE11).